Reading from the N-terminus, the 453-residue chain is Ribose 1,5-bisphosphate phosphokinase PhnN (453 aa).

Positions 1-21 (MHGSTGFVQGTRPAGDQADPL) are disordered. Residues 1–271 (MHGSTGFVQG…SGQGERASLP (271 aa)) form a unknown region. Residues 272 to 453 (HSGRIFFCVG…KLLDILRQAK (182 aa)) form a ribose 1,5-bisphosphokinase region.

It in the C-terminal section; belongs to the ribose 1,5-bisphosphokinase family.

It catalyses the reaction alpha-D-ribose 1,5-bisphosphate + ATP = 5-phospho-alpha-D-ribose 1-diphosphate + ADP. Its pathway is metabolic intermediate biosynthesis; 5-phospho-alpha-D-ribose 1-diphosphate biosynthesis; 5-phospho-alpha-D-ribose 1-diphosphate from D-ribose 5-phosphate (route II): step 3/3. In terms of biological role, catalyzes the phosphorylation of ribose 1,5-bisphosphate to 5-phospho-D-ribosyl alpha-1-diphosphate (PRPP). The chain is Ribose 1,5-bisphosphate phosphokinase PhnN (phnN) from Janthinobacterium sp. (strain Marseille) (Minibacterium massiliensis).